We begin with the raw amino-acid sequence, 43 residues long: Omega-ctenitoxin-Pr1a (43 aa).

Disulfide bonds link Cys2–Cys17, Cys9–Cys22, Cys16–Cys33, and Cys24–Cys31. Glycine amide is present on Gly43.

In terms of tissue distribution, expressed by the venom gland.

The protein resides in the secreted. Its function is as follows. Inhibits high-voltage activated calcium channels. Shifts the voltage-dependence for activation towards hyperpolarized membrane potentials for L- (Cav1), P/Q- (Cav2.1/CACNA1A) and R-type (Cav2.3/CACNA1E) calcium currents. Causes immediate agitation and clockwise gyration, followed by the gradual development of general flaccid paralysis when injected intracerebroventricular into mice at dose levels of 5 ug per mouse. The chain is Omega-ctenitoxin-Pr1a from Phoneutria reidyi (Brazilian Amazonian armed spider).